The sequence spans 144 residues: UPF0306 protein Spro_0510 (144 aa).

This sequence belongs to the UPF0306 family.

The chain is UPF0306 protein Spro_0510 from Serratia proteamaculans (strain 568).